A 968-amino-acid chain; its full sequence is RNA polymerase-associated protein RapA (968 aa).

The Helicase ATP-binding domain occupies glutamate 163 to aspartate 332. Aspartate 176–threonine 183 serves as a coordination point for ATP. The DEAH box signature appears at aspartate 278–histidine 281. The Helicase C-terminal domain maps to arginine 491–asparagine 645.

This sequence belongs to the SNF2/RAD54 helicase family. RapA subfamily. In terms of assembly, interacts with the RNAP. Has a higher affinity for the core RNAP than for the holoenzyme. Its ATPase activity is stimulated by binding to RNAP.

Its function is as follows. Transcription regulator that activates transcription by stimulating RNA polymerase (RNAP) recycling in case of stress conditions such as supercoiled DNA or high salt concentrations. Probably acts by releasing the RNAP, when it is trapped or immobilized on tightly supercoiled DNA. Does not activate transcription on linear DNA. Probably not involved in DNA repair. The polypeptide is RNA polymerase-associated protein RapA (Shewanella woodyi (strain ATCC 51908 / MS32)).